The sequence spans 416 residues: Actin-like protein 9 (416 aa).

The segment at 1-40 (MDASRPKSSESQSSLEAPRPGPNPSPNVVNKPLQRDSPGM) is disordered.

It belongs to the actin family. In terms of assembly, interacts with ACTL7A. As to expression, testis-specific.

The protein localises to the cytoplasmic vesicle. It localises to the secretory vesicle. It is found in the acrosome. The protein resides in the cytoplasm. Its subcellular location is the cytoskeleton. The protein localises to the perinuclear theca. Functionally, testis-specic protein that plays an important role in fusion of proacrosomal vesicles and perinuclear theca formation. This chain is Actin-like protein 9, found in Homo sapiens (Human).